A 304-amino-acid polypeptide reads, in one-letter code: UDP-3-O-acyl-N-acetylglucosamine deacetylase (304 aa).

Residues His-78, His-237, and Asp-241 each coordinate Zn(2+). His-264 functions as the Proton donor in the catalytic mechanism.

This sequence belongs to the LpxC family. Requires Zn(2+) as cofactor.

The catalysed reaction is a UDP-3-O-[(3R)-3-hydroxyacyl]-N-acetyl-alpha-D-glucosamine + H2O = a UDP-3-O-[(3R)-3-hydroxyacyl]-alpha-D-glucosamine + acetate. Its pathway is glycolipid biosynthesis; lipid IV(A) biosynthesis; lipid IV(A) from (3R)-3-hydroxytetradecanoyl-[acyl-carrier-protein] and UDP-N-acetyl-alpha-D-glucosamine: step 2/6. Catalyzes the hydrolysis of UDP-3-O-myristoyl-N-acetylglucosamine to form UDP-3-O-myristoylglucosamine and acetate, the committed step in lipid A biosynthesis. The protein is UDP-3-O-acyl-N-acetylglucosamine deacetylase of Legionella pneumophila (strain Paris).